We begin with the raw amino-acid sequence, 639 residues long: Chaperone protein DnaK (639 aa).

Phosphothreonine; by autocatalysis is present on threonine 198. Positions 602 to 639 are disordered; sequence QAKSQAQGGDNADAGKQANATADDVVDAEFEEVKDDKK. Residues 625 to 639 show a composition bias toward acidic residues; that stretch reads DVVDAEFEEVKDDKK.

The protein belongs to the heat shock protein 70 family.

Functionally, acts as a chaperone. This chain is Chaperone protein DnaK, found in Shewanella baltica (strain OS155 / ATCC BAA-1091).